The following is a 625-amino-acid chain: Tumor necrosis factor receptor superfamily member 11A (625 aa).

A signal peptide spans 1 to 30 (MAPRARRRRQLPAPLLALCVLLVPLQVTLQ). At 31-214 (VTPPCTQERH…PKEAQAYLPS (184 aa)) the chain is on the extracellular side. Intrachain disulfides connect C35/C47, C48/C61, C51/C69, C72/C87, C93/C113, C115/C128, C125/C127, C134/C152, and C155/C170. TNFR-Cys repeat units lie at residues 35–69 (CTQE…DSVC), 72–113 (CGPD…PRRC), 115–152 (CTAG…DTVC), and 155–195 (CLLG…DVVC). A glycan (N-linked (GlcNAc...) asparagine) is linked at N106. The Na(+) site is built by C134, A135, F138, S161, and V163. Residue N175 is glycosylated (N-linked (GlcNAc...) asparagine). A disulfide bridge links C176 with C195. The chain crosses the membrane as a helical span at residues 215-234 (LIVLLLFISVVVVAAIIFGV). Residues 235 to 625 (YYRKGGKALT…HTQGSGQCAE (391 aa)) are Cytoplasmic-facing. Disordered regions lie at residues 331–356 (TQGD…STGS), 388–413 (GTES…MPVS), and 479–524 (SMAE…FISS). The segment covering 499-511 (SGSSPSDQPPASG) has biased composition (low complexity). A compositionally biased stretch (polar residues) spans 512–524 (NVTGNSNSTFISS). Residues 532-537 (GDIIVV) are required for interaction with EEIG1 and osteoclast differentiation. Residues 542 to 625 (TSQEGPGSAE…HTQGSGQCAE (84 aa)) are disordered. Residues 543–558 (SQEGPGSAEPESEPVG) are compositionally biased toward low complexity. Residues 561-571 (VQEETLAHRDS) show a composition bias toward basic and acidic residues. S571 is modified (phosphoserine). Positions 603–625 (RPVQEQGGAQTSLHTQGSGQCAE) are enriched in polar residues.

In terms of assembly, binds to the clefts between the subunits of the TNFSF11 ligand trimer to form a heterohexamer. Part of a complex composed of EEIG1, TNFRSF11A/RANK, PLCG2, GAB2, TEC and BTK; complex formation increases in the presence of TNFSF11/RANKL. Interacts with TRAF1, TRAF2, TRAF3, TRAF5 and TRAF6. Interacts (via cytoplasmic domain) with GAB2. Interacts (via cytoplasmic domain); with EEIG1 (via N-terminus); when in the presence of TNFSF11/RANKL. As to expression, ubiquitous expression with high levels in trabecular bone, thymus, small intestine, lung, brain and kidney. Weakly expressed in spleen and bone marrow.

Its subcellular location is the cell membrane. It localises to the membrane raft. In terms of biological role, receptor for TNFSF11/RANKL/TRANCE/OPGL; essential for RANKL-mediated osteoclastogenesis. Its interaction with EEIG1 promotes osteoclastogenesis via facilitating the transcription of NFATC1 and activation of PLCG2. Involved in the regulation of interactions between T-cells and dendritic cells. The polypeptide is Tumor necrosis factor receptor superfamily member 11A (Tnfrsf11a) (Mus musculus (Mouse)).